A 350-amino-acid polypeptide reads, in one-letter code: Ferrochelatase (350 aa).

Residues histidine 220 and glutamate 301 each coordinate Fe cation.

The protein belongs to the ferrochelatase family.

The protein localises to the cytoplasm. The catalysed reaction is heme b + 2 H(+) = protoporphyrin IX + Fe(2+). Its pathway is porphyrin-containing compound metabolism; protoheme biosynthesis; protoheme from protoporphyrin-IX: step 1/1. Catalyzes the ferrous insertion into protoporphyrin IX. The chain is Ferrochelatase from Brucella anthropi (strain ATCC 49188 / DSM 6882 / CCUG 24695 / JCM 21032 / LMG 3331 / NBRC 15819 / NCTC 12168 / Alc 37) (Ochrobactrum anthropi).